The following is a 144-amino-acid chain: Large ribosomal subunit protein uL15 (144 aa).

Positions 1–48 are disordered; the sequence is MQLNNLKPADGSKHAKRRVGRGIGSGLGKTAGRGHKGQKSRSGGFHKV. Residues 21–31 are compositionally biased toward gly residues; sequence RGIGSGLGKTA.

This sequence belongs to the universal ribosomal protein uL15 family. As to quaternary structure, part of the 50S ribosomal subunit.

In terms of biological role, binds to the 23S rRNA. The chain is Large ribosomal subunit protein uL15 from Cupriavidus metallidurans (strain ATCC 43123 / DSM 2839 / NBRC 102507 / CH34) (Ralstonia metallidurans).